The following is a 487-amino-acid chain: MFITGAFFDILEVGPKKIRRCFELVRVRFAPSPTGHLHVGGARTALFNWMFARKEGGKFILRIEDTDTERSSREYEQQILESLRWCGLDWDEGPDIGGDFGPYRQSERLEIYREYAEKLVEDKRAYYVVYDKEDPSKELFTTYEYPHEYKEKGHPVTIKFKVLPGKTSFEDLLKGYMEFDNSTLEDFIIMKSNGFPTYNFAVVVDDHLMRISHVFRGEDHLSNTPKQLMIYEAFGWEAPVFMHIPLILGSDRTPLSKRHGATSVEHFRREGILSRALMNYLALLGWRVEGDEIFTIEEKLQSFDPKDISNKGVIFDYQKLEWVNGKHMRRIDLEDLKREFIEWAKYAGKEIPSVDERYFSETLRICREKVNTLSQLYDIMYPFMNDDYEYEKDYVEKFLKREEAERVLEEAKKAFKDLNSWNMEEIEKTLRDLSEKGLASKKVVFQLIRGAVTGKLVTPGLFETIEVLGKERTLKRLERTLQFLKKT.

The 'HIGH' region motif lies at 31–41; that stretch reads PSPTGHLHVGG. The 'KMSKS' region motif lies at 254–258; the sequence is PLSKR. Lysine 257 contacts ATP.

The protein belongs to the class-I aminoacyl-tRNA synthetase family. Glutamate--tRNA ligase type 1 subfamily. Monomer.

It localises to the cytoplasm. It carries out the reaction tRNA(Glu) + L-glutamate + ATP = L-glutamyl-tRNA(Glu) + AMP + diphosphate. In terms of biological role, catalyzes the attachment of glutamate to tRNA(Glu) in a two-step reaction: glutamate is first activated by ATP to form Glu-AMP and then transferred to the acceptor end of tRNA(Glu). The protein is Glutamate--tRNA ligase 2 of Thermotoga maritima (strain ATCC 43589 / DSM 3109 / JCM 10099 / NBRC 100826 / MSB8).